We begin with the raw amino-acid sequence, 2102 residues long: Probable serine/threonine-protein kinase DDB_G0272282 (2102 aa).

The PX domain occupies 1–118 (MKYQLSILGD…NWLVPQNEPA (118 aa)). Residues 124 to 222 (NPDKSGYLIK…WIKAIELSQQ (99 aa)) enclose the PH domain. Residues 225-240 (QDQEQYRKQEEEERQK) are compositionally biased toward basic and acidic residues. Disordered stretches follow at residues 225–289 (QDQE…SDGS), 302–390 (GPNN…SDLN), 426–558 (EQPG…SASP), 574–665 (SNLP…PLPN), 685–768 (NNNS…NNSL), 804–842 (KKKEKDKEKEKDKEKEKEKEIGGNISTSTTPNKKNGTLR), 1029–1051 (QQQQQKQNETTGTTTGTAGSSVN), 1106–1224 (GTPT…PQPQ), and 1476–1514 (SSKVDSSSSSQISSPILSSPPPPMKQPPPQVIVPPSSLT). Low complexity-rich tracts occupy residues 256 to 281 (STLTSASAPTSPVQSSSSTSNMLPSS) and 304 to 327 (NNSNNNNNNNNNSYYYSHSSNNHN). Basic residues predominate over residues 328–348 (HYNHHNNNHNNSHHHHHHHNG). 2 stretches are compositionally biased toward low complexity: residues 353–376 (SSQVSLSVNTTSSNSSGSSSSTSL) and 426–437 (EQPGSYQQPQHQ). Over residues 438–450 (QGGGGGGGGGGGN) the composition is skewed to gly residues. Low complexity predominate over residues 466–484 (SNLSSRSNSNSSGSSSGSG). Residues 485–501 (SSSGSGPIGSGGVGGGL) show a composition bias toward gly residues. 2 stretches are compositionally biased toward low complexity: residues 535–558 (SNSSSSISSSSSSSSASSASSASP) and 587–626 (NANNNNNNNNNNNNNNNNNNNNDFNLNNNNNNNNNNNNGN). The span at 627 to 659 (TASGSSCNTTPNLLPAPTNVSPIQNRARSSPMT) shows a compositional bias: polar residues. Residues 804 to 824 (KKKEKDKEKEKDKEKEKEKEI) are compositionally biased toward basic and acidic residues. The span at 827–841 (NISTSTTPNKKNGTL) shows a compositional bias: polar residues. Residues 1106-1118 (GTPTTTSGDNTPL) show a composition bias toward polar residues. 3 stretches are compositionally biased toward low complexity: residues 1119 to 1182 (TNTA…NSSI), 1196 to 1221 (EQQQEQQQQQHQEQPLQPQQQQQQQP), and 1476 to 1492 (SSKVDSSSSSQISSPIL). The segment covering 1493–1507 (SSPPPPMKQPPPQVI) has biased composition (pro residues). Residues 1527-1851 (FEIIKPISRG…AYEVKTHPFF (325 aa)) form the Protein kinase domain. ATP is bound by residues 1533–1541 (ISRGAFGRV) and Lys-1556. Asp-1650 serves as the catalytic Proton acceptor. Low complexity-rich tracts occupy residues 1687 to 1729 (NTNT…SQTN), 1902 to 1999 (SQPQ…NINN), and 2006 to 2052 (NNNS…QINN). 2 disordered regions span residues 1687 to 1741 (NTNT…KNTL) and 1902 to 2070 (SQPQ…SKIE). In terms of domain architecture, AGC-kinase C-terminal spans 1852–1911 (ANVNWDTLIDQEMDNIFLPKPENNYDTDYFWDRQSMYDDEAEDDFLTINQSQPQHQSQHQ).

Belongs to the protein kinase superfamily. AGC Ser/Thr protein kinase family.

The enzyme catalyses L-seryl-[protein] + ATP = O-phospho-L-seryl-[protein] + ADP + H(+). It catalyses the reaction L-threonyl-[protein] + ATP = O-phospho-L-threonyl-[protein] + ADP + H(+). This is Probable serine/threonine-protein kinase DDB_G0272282 from Dictyostelium discoideum (Social amoeba).